The chain runs to 181 residues: MSFVPTKVFFTKGVGRHKEYLSSFELALREAKIEKCNLVTVSSIFPPQCERISVEEGLKSLSPGEITFAVMARNSTNEHGRLIASSIGVALPADESVYGYLSEHHPYGQTEEQSGEYAEDLAATMLATTLGIEFDPNKDWDEREGIYKMSGKIINSFNITQSAEGQNGLWTTVIACAVLLP.

Residue serine 43 is modified to Pyruvic acid (Ser).

It belongs to the PdaD family. It depends on pyruvate as a cofactor.

It catalyses the reaction L-arginine + H(+) = agmatine + CO2. In Prosthecochloris aestuarii (strain DSM 271 / SK 413), this protein is Probable pyruvoyl-dependent arginine decarboxylase.